Reading from the N-terminus, the 304-residue chain is Putative AraC-like transcription regulator (304 aa).

The HTH araC/xylS-type domain maps to 202 to 300 (ATALTCLHRD…GMPPGDYRKH (99 aa)). 2 DNA-binding regions (H-T-H motif) span residues 219 to 240 (ADLADTAAVSRSTLAARFKATV) and 267 to 290 (LASIAHSVGYGSESALSVAFKRVL).

This is Putative AraC-like transcription regulator from Streptomyces lividans.